Consider the following 462-residue polypeptide: Cysteine--tRNA ligase (462 aa).

Cys-29 contacts Zn(2+). The 'HIGH' region signature appears at 31–41 (MTVYDLCHLGH). Zn(2+) is bound by residues Cys-217, His-242, and Glu-246. A 'KMSKS' region motif is present at residues 274-278 (KMSKS). Lys-277 provides a ligand contact to ATP.

The protein belongs to the class-I aminoacyl-tRNA synthetase family. In terms of assembly, monomer. Zn(2+) serves as cofactor.

It is found in the cytoplasm. The enzyme catalyses tRNA(Cys) + L-cysteine + ATP = L-cysteinyl-tRNA(Cys) + AMP + diphosphate. The protein is Cysteine--tRNA ligase of Polaromonas sp. (strain JS666 / ATCC BAA-500).